The following is a 78-amino-acid chain: DNA-directed RNA polymerase subunit Rpo5 (78 aa).

The protein belongs to the archaeal Rpo5/eukaryotic RPB5 RNA polymerase subunit family. Part of the RNA polymerase complex.

It is found in the cytoplasm. It carries out the reaction RNA(n) + a ribonucleoside 5'-triphosphate = RNA(n+1) + diphosphate. DNA-dependent RNA polymerase (RNAP) catalyzes the transcription of DNA into RNA using the four ribonucleoside triphosphates as substrates. The polypeptide is DNA-directed RNA polymerase subunit Rpo5 (Methanococcus vannielii (strain ATCC 35089 / DSM 1224 / JCM 13029 / OCM 148 / SB)).